We begin with the raw amino-acid sequence, 146 residues long: uncharacterized protein (146 aa).

The helical transmembrane segment at 7–27 (FVLSITIVLVILIIIAYIWYN) threads the bilayer.

This sequence belongs to the asfivirus E146L family.

It is found in the host membrane. It localises to the virion. This is an uncharacterized protein from Ornithodoros (relapsing fever ticks).